The sequence spans 121 residues: Amelogenin (121 aa).

The segment at 1–121 is disordered; the sequence is LHHQIIPVLS…DLPLEPWPAS (121 aa). 2 stretches are compositionally biased toward polar residues: residues 10–19 and 47–59; these read SQHQTPTHAL and HSVT…QSNL. Residues 60-84 are compositionally biased toward low complexity; that stretch reads PQPGQQPFQPQFPQKPTHRPIQPQA. The span at 85 to 121 shows a compositional bias: pro residues; the sequence is PVHPMPPMPQPQLPPMFPLQPLPPLLPDLPLEPWPAS.

This sequence belongs to the amelogenin family.

It localises to the secreted. The protein resides in the extracellular space. Its subcellular location is the extracellular matrix. Plays a role in the biomineralization of teeth. Seems to regulate the formation of crystallites during the secretory stage of tooth enamel development. Thought to play a major role in the structural organization and mineralization of developing enamel. This chain is Amelogenin (AMEL), found in Tachyglossus aculeatus aculeatus (Southeast Australian short-beaked echidna).